The chain runs to 166 residues: Regulator of ribonuclease activity A (166 aa).

This sequence belongs to the RraA family. Homotrimer. Binds to both RNA-binding sites in the C-terminal region of Rne and to RhlB.

The protein resides in the cytoplasm. In terms of biological role, globally modulates RNA abundance by binding to RNase E (Rne) and regulating its endonucleolytic activity. Can modulate Rne action in a substrate-dependent manner by altering the composition of the degradosome. Modulates RNA-binding and helicase activities of the degradosome. In Mannheimia succiniciproducens (strain KCTC 0769BP / MBEL55E), this protein is Regulator of ribonuclease activity A.